A 701-amino-acid chain; its full sequence is Polyribonucleotide nucleotidyltransferase (701 aa).

Residues Asp-487 and Asp-493 each contribute to the Mg(2+) site. Positions 554–613 (PTMLAMKIDQDKIRDVIGKGGATIRAICEETKASIDIEDDGSIKIFGETKEAAEAAKQRV) constitute a KH domain. One can recognise an S1 motif domain in the interval 623 to 691 (GKIYVGKVER…NRGRIKLSIK (69 aa)).

This sequence belongs to the polyribonucleotide nucleotidyltransferase family. Component of the RNA degradosome, which is a multiprotein complex involved in RNA processing and mRNA degradation. Mg(2+) serves as cofactor.

It localises to the cytoplasm. The catalysed reaction is RNA(n+1) + phosphate = RNA(n) + a ribonucleoside 5'-diphosphate. Functionally, involved in mRNA degradation. Catalyzes the phosphorolysis of single-stranded polyribonucleotides processively in the 3'- to 5'-direction. The sequence is that of Polyribonucleotide nucleotidyltransferase from Stutzerimonas stutzeri (strain A1501) (Pseudomonas stutzeri).